The sequence spans 658 residues: tRNA 5-methylaminomethyl-2-thiouridine biosynthesis bifunctional protein MnmC (658 aa).

Residues 1 to 236 form a tRNA (mnm(5)s(2)U34)-methyltransferase region; it reads MIPELPHAQL…KWEVLRGEFL (236 aa). Positions 265–658 are FAD-dependent cmnm(5)s(2)U34 oxidoreductase; sequence IGGGLAGCAS…ALRRLIRGKA (394 aa).

The protein in the N-terminal section; belongs to the methyltransferase superfamily. tRNA (mnm(5)s(2)U34)-methyltransferase family. In the C-terminal section; belongs to the DAO family. Requires FAD as cofactor.

The protein resides in the cytoplasm. The catalysed reaction is 5-aminomethyl-2-thiouridine(34) in tRNA + S-adenosyl-L-methionine = 5-methylaminomethyl-2-thiouridine(34) in tRNA + S-adenosyl-L-homocysteine + H(+). Catalyzes the last two steps in the biosynthesis of 5-methylaminomethyl-2-thiouridine (mnm(5)s(2)U) at the wobble position (U34) in tRNA. Catalyzes the FAD-dependent demodification of cmnm(5)s(2)U34 to nm(5)s(2)U34, followed by the transfer of a methyl group from S-adenosyl-L-methionine to nm(5)s(2)U34, to form mnm(5)s(2)U34. This Pseudomonas fluorescens (strain ATCC BAA-477 / NRRL B-23932 / Pf-5) protein is tRNA 5-methylaminomethyl-2-thiouridine biosynthesis bifunctional protein MnmC.